We begin with the raw amino-acid sequence, 238 residues long: MDVPLPVEKLSYGSNTEDKTCVVLVATGSFNPPTFMHLRMFELARDELRSKGFHVLGGYMSPVNDAYKKKGLLSAEHRLEMCNVSCQSSDFVMVDPWEASQSNYQRTLTVLSRVKTFLTTNRHVPEESLKVMLLCGSDLLLSFCTPGVWIPEQLRTICKDYGIVCIRREGQDVENMISGDEILNENCANVKIVDNTVPNQISSSRLRQCISRGLSVKYLTEDGVIDYIRQHQLYTELT.

Residues serine 29 and phenylalanine 30 each contribute to the NAD(+) site. ATP contacts are provided by histidine 37 and lysine 70. Residues threonine 107, glycine 136, aspartate 138, tryptophan 149, arginine 168, and asparagine 199 each contribute to the NAD(+) site. An ATP-binding site is contributed by 204–205 (SR).

The protein belongs to the eukaryotic NMN adenylyltransferase family. It depends on a divalent metal cation as a cofactor.

The protein resides in the nucleus. It carries out the reaction beta-nicotinamide D-ribonucleotide + ATP + H(+) = diphosphate + NAD(+). It catalyses the reaction nicotinate beta-D-ribonucleotide + ATP + H(+) = deamido-NAD(+) + diphosphate. It participates in cofactor biosynthesis; NAD(+) biosynthesis; deamido-NAD(+) from nicotinate D-ribonucleotide: step 1/1. It functions in the pathway cofactor biosynthesis; NAD(+) biosynthesis; NAD(+) from nicotinamide D-ribonucleotide: step 1/1. Functionally, catalyzes the formation of NAD(+) from nicotinamide mononucleotide (NMN) and ATP. Can also use the deamidated form; nicotinic acid mononucleotide (NaMN) as substrate. This chain is Nicotinamide/nicotinic acid mononucleotide adenylyltransferase (NMNAT), found in Arabidopsis thaliana (Mouse-ear cress).